The following is a 96-amino-acid chain: Progonadoliberin-1 (96 aa).

A signal peptide spans 1–26; that stretch reads MHRKMAVKTLSVWLLLVGTLVPQHCC. Pyrrolidone carboxylic acid is present on Gln-27. Gly-36 carries the post-translational modification Glycine amide.

Belongs to the GnRH family. In terms of tissue distribution, preoptic area of the brain.

It localises to the secreted. In terms of biological role, stimulates the secretion of gonadotropins. This Verasper moseri (Barfin flounder) protein is Progonadoliberin-1 (gnrh1).